A 349-amino-acid polypeptide reads, in one-letter code: Protein RecA (349 aa).

ATP is bound at residue 65–72; it reads GPESSGKT.

The protein belongs to the RecA family.

Its subcellular location is the cytoplasm. Can catalyze the hydrolysis of ATP in the presence of single-stranded DNA, the ATP-dependent uptake of single-stranded DNA by duplex DNA, and the ATP-dependent hybridization of homologous single-stranded DNAs. It interacts with LexA causing its activation and leading to its autocatalytic cleavage. This Enterococcus faecium (Streptococcus faecium) protein is Protein RecA.